The following is a 305-amino-acid chain: Homoserine kinase (305 aa).

93-103 is an ATP binding site; that stretch reads PLSRGLGSSAT.

It belongs to the GHMP kinase family. Homoserine kinase subfamily.

It is found in the cytoplasm. The catalysed reaction is L-homoserine + ATP = O-phospho-L-homoserine + ADP + H(+). It functions in the pathway amino-acid biosynthesis; L-threonine biosynthesis; L-threonine from L-aspartate: step 4/5. Its function is as follows. Catalyzes the ATP-dependent phosphorylation of L-homoserine to L-homoserine phosphate. The chain is Homoserine kinase from Picosynechococcus sp. (strain ATCC 27264 / PCC 7002 / PR-6) (Agmenellum quadruplicatum).